A 548-amino-acid chain; its full sequence is Probable malate:quinone oxidoreductase (548 aa).

The interval 521-548 is disordered; the sequence is DKPQAADSTPKPQLKPKPVQKEVADIAL. The segment covering 539-548 has biased composition (basic and acidic residues); that stretch reads VQKEVADIAL.

Belongs to the MQO family. It depends on FAD as a cofactor.

It carries out the reaction (S)-malate + a quinone = a quinol + oxaloacetate. It participates in carbohydrate metabolism; tricarboxylic acid cycle; oxaloacetate from (S)-malate (quinone route): step 1/1. The sequence is that of Probable malate:quinone oxidoreductase from Escherichia coli (strain ATCC 8739 / DSM 1576 / NBRC 3972 / NCIMB 8545 / WDCM 00012 / Crooks).